The chain runs to 527 residues: Catalase (527 aa).

A2 carries the N-acetylalanine modification. Position 9 is a phosphoserine (S9). Position 13 is an N6-succinyllysine (K13). Active-site residues include H75 and N148. Positions 194, 201, 203, and 213 each coordinate NADP(+). K221 carries the post-translational modification N6-succinyllysine. Position 233 is an N6-acetyllysine (K233). NADP(+) contacts are provided by K237, W303, H305, and K306. K306 carries the post-translational modification N6-acetyllysine; alternate. K306 is subject to N6-succinyllysine; alternate. Y358 lines the heme pocket. Phosphoserine is present on residues S417 and S422. Position 480 is an N6-acetyllysine; alternate (K480). K480 carries the post-translational modification N6-succinyllysine; alternate. An N6-acetyllysine modification is found at K499. A Phosphothreonine modification is found at T511. Phosphoserine is present on residues S515 and S517. Residues 524–527 (KANL) carry the Microbody targeting signal; atypical motif.

The protein belongs to the catalase family. Homotetramer. Interacts (via microbody targeting signal) with PEX5, monomeric form interacts with PEX5, leading to its translocation into peroxisomes. Requires heme as cofactor. The cofactor is NADP(+).

The protein resides in the peroxisome matrix. The catalysed reaction is 2 H2O2 = O2 + 2 H2O. Functionally, catalyzes the degradation of hydrogen peroxide (H(2)O(2)) generated by peroxisomal oxidases to water and oxygen, thereby protecting cells from the toxic effects of hydrogen peroxide. Promotes growth of cells including T-cells, B-cells, myeloid leukemia cells, melanoma cells, mastocytoma cells and normal and transformed fibroblast cells. In Pongo abelii (Sumatran orangutan), this protein is Catalase (CAT).